A 1166-amino-acid polypeptide reads, in one-letter code: Serine-aspartate repeat-containing protein E (1166 aa).

The first 52 residues, 1-52 (MINRDNKKAITKKGMISNRLNKFSIRKYTVGTASILVGTTLIFGLGNQEAKA), serve as a signal peptide directing secretion. Residues 23–34 (FSIRKYTVGTAS) carry the YSIRK-G/S signaling motif motif. The ligand binding A region stretch occupies residues 53 to 606 (AENTSTENAK…GDGTVKPEEK (554 aa)). The disordered stretch occupies residues 54–230 (ENTSTENAKQ…SKEELKNNPE (177 aa)). Residues 61–75 (AKQDDATTSDNKEVV) show a composition bias toward basic and acidic residues. Residues 77 to 90 (ETENNSTTENNSTN) show a composition bias toward low complexity. The segment covering 92–108 (IKKETNTDSQPEAKKES) has biased composition (basic and acidic residues). Residues 118–129 (NNVTATTETKPQ) show a composition bias toward polar residues. Residues 130 to 145 (NIEKENVKPSTDKTAT) are compositionally biased toward basic and acidic residues. Low complexity predominate over residues 166–178 (TTKPSTSEPSTSE). Residues 179 to 212 (IQTKPTTPQESTNIENSQPQPTPSKVDNQVTDAT) are compositionally biased toward polar residues. The segment covering 221–230 (SKEELKNNPE) has biased composition (basic and acidic residues). CNA-B domains are found at residues 607 to 719 (LYKI…YKEP), 720 to 829 (KYNL…YKTP), and 830 to 940 (KYSL…EEDT). The segment at 904–1141 (VTNTTEDDKD…TGSENNGSNN (238 aa)) is disordered. Composition is skewed to acidic residues over residues 908–918 (TEDDKDADGGE) and 935–1105 (YFEE…DSDS). An LPXTG sorting signal motif is present at residues 1129-1133 (LPETG). The residue at position 1132 (threonine 1132) is a Pentaglycyl murein peptidoglycan amidated threonine. The propeptide at 1133-1166 (GSENNGSNNATLFGGLFAALGSLLLFGRRKKQNK) is removed by sortase.

This sequence belongs to the serine-aspartate repeat-containing protein (SDr) family. As to quaternary structure, interacts with host complement factor H/CFAH (via C-terminus). Interacts with host complement regulator C4BPA.

Its subcellular location is the secreted. It is found in the cell wall. Cell surface-associated calcium-binding protein which plays an important role in adhesion and pathogenesis. Contributes to the resistance to killing by innate immune components in blood and thus attenuates bacterial clearance by interacting with host complement factor H/CFAH and modulating its activity. Inhibits also bacterial opsonization and killing by interacting with host complement regulator C4BPA and thus inhibiting classical complement pathway activation. This Staphylococcus aureus (strain Newman) protein is Serine-aspartate repeat-containing protein E (sdrE).